Reading from the N-terminus, the 448-residue chain is Phosphoglucosamine mutase (448 aa).

Serine 108 acts as the Phosphoserine intermediate in catalysis. Residues serine 108, aspartate 247, aspartate 249, and aspartate 251 each contribute to the Mg(2+) site. Serine 108 carries the post-translational modification Phosphoserine.

Belongs to the phosphohexose mutase family. It depends on Mg(2+) as a cofactor. Activated by phosphorylation.

It carries out the reaction alpha-D-glucosamine 1-phosphate = D-glucosamine 6-phosphate. Catalyzes the conversion of glucosamine-6-phosphate to glucosamine-1-phosphate. This is Phosphoglucosamine mutase from Herminiimonas arsenicoxydans.